The sequence spans 76 residues: KANTR integral membrane protein (76 aa).

Positions 1–25 (MSPFSLLILVICAFSLFFLINLTRG) are cleaved as a signal peptide. The Extracellular segment spans residues 26-34 (LSILLVFSK). The helical transmembrane segment at 35–55 (NQLLALLLLSIVSLFSISLIS) threads the bilayer. The Cytoplasmic segment spans residues 56–76 (ALIFFDLLPSTFFGFILLFFF).

The protein resides in the membrane. The chain is KANTR integral membrane protein from Homo sapiens (Human).